A 96-amino-acid polypeptide reads, in one-letter code: DNA-directed RNA polymerase subunit Rpo11 (96 aa).

It belongs to the archaeal Rpo11/eukaryotic RPB11/RPC19 RNA polymerase subunit family. In terms of assembly, part of the RNA polymerase complex.

It is found in the cytoplasm. The enzyme catalyses RNA(n) + a ribonucleoside 5'-triphosphate = RNA(n+1) + diphosphate. Its function is as follows. DNA-dependent RNA polymerase (RNAP) catalyzes the transcription of DNA into RNA using the four ribonucleoside triphosphates as substrates. This chain is DNA-directed RNA polymerase subunit Rpo11, found in Haloquadratum walsbyi (strain DSM 16790 / HBSQ001).